Consider the following 662-residue polypeptide: Zinc finger protein 800 (662 aa).

A C2H2-type 1; degenerate zinc finger spans residues 69 to 91 (FECKLCRSLFRGLPNLITHKKFY). Lysine 132 participates in a covalent cross-link: Glycyl lysine isopeptide (Lys-Gly) (interchain with G-Cter in SUMO2). Disordered regions lie at residues 172–197 (ETSS…PPSI) and 205–224 (AAPT…TSDS). A compositionally biased stretch (low complexity) spans 205–216 (AAPTEEQPQESQ). The C2H2-type 2 zinc-finger motif lies at 231–254 (LICCLCRKEFNSRRGVRRHIRKVH). Residue lysine 280 forms a Glycyl lysine isopeptide (Lys-Gly) (interchain with G-Cter in SUMO2) linkage. The C2H2-type 3 zinc finger occupies 288-311 (RSCPVCCKSFATKANVRRHFDEVH). A Phosphoserine modification is found at serine 318. The disordered stretch occupies residues 319-349 (ITPDIATKPGQPLFLDSASPKKSFKTRKQKS). Phosphothreonine is present on threonine 320. Serine 337 carries the phosphoserine modification. The segment covering 340-349 (KSFKTRKQKS) has biased composition (basic residues). The segment at 357-382 (TACKCLLCKRKYSSQIMLKRHMQIVH) adopts a C2H2-type 4 zinc-finger fold. Residues 389–473 (ANSKREKGPN…AGGQQKTRKP (85 aa)) form a disordered region. Lysine 392 participates in a covalent cross-link: Glycyl lysine isopeptide (Lys-Gly) (interchain with G-Cter in SUMO2). The span at 414 to 434 (VESSPPSITHSPQNELKGTNH) shows a compositional bias: polar residues. Residues serine 420, serine 424, serine 453, serine 455, serine 458, and serine 460 each carry the phosphoserine modification. Positions 456–468 (PKSASPSAAGGQQ) are enriched in low complexity. A Glycyl lysine isopeptide (Lys-Gly) (interchain with G-Cter in SUMO2) cross-link involves residue lysine 474. 2 C2H2-type zinc fingers span residues 484–506 (LYCK…IELH) and 517–540 (YKCP…TVVH). 2 disordered regions span residues 573-597 (RGPS…PSKK) and 633-662 (HHKK…KALV). The span at 575–587 (PSREEAKHNDSKQ) shows a compositional bias: basic and acidic residues. Residue lysine 597 forms a Glycyl lysine isopeptide (Lys-Gly) (interchain with G-Cter in SUMO2) linkage. The C2H2-type 7 zinc finger occupies 616 to 638 (HRCNKCGKAFAKKTYLEHHKKTH). Over residues 651–662 (TKGRSTRSKALV) the composition is skewed to basic residues.

This sequence belongs to the krueppel C2H2-type zinc-finger protein family.

Its subcellular location is the nucleus. Its function is as follows. May be involved in transcriptional regulation. In Mus musculus (Mouse), this protein is Zinc finger protein 800 (Znf800).